The primary structure comprises 129 residues: Ubiquinol-cytochrome-c reductase complex assembly factor 2 (129 aa).

Residues 1 to 13 (MSATRYRRFLKLC) constitute a mitochondrion transit peptide.

It is found in the mitochondrion matrix. It localises to the mitochondrion nucleoid. The protein localises to the mitochondrion. Its function is as follows. Required for the assembly of the ubiquinol-cytochrome c reductase complex (mitochondrial respiratory chain complex III or cytochrome b-c1 complex). May play a role in the modulation of respiratory chain activities such as oxygen consumption and ATP production. May be involved in cytochrome b translation and/or stability. This Danio rerio (Zebrafish) protein is Ubiquinol-cytochrome-c reductase complex assembly factor 2 (uqcc2).